The chain runs to 479 residues: MANFTPVNGSSANQSVRLVTTAHNHLETVEMVFIATVTGSLSLVTVVGNILVMLSIKVNRQLQTVNNYFLFSLACADLIIGAFSMNLYTLYIIKGYWPLGAVVCDLWLALDYVVSNASVMNLLIISFDRYFCVTKPLTYPARRTTKMAGLMIAAAWVLSFVLWAPAILFWQFVVGKRTVPDNQCFIQFLSNPAVTFGTAIAAFYLPVVIMTVLYIHISLASRSRVHKHRPEGPKEKKAKTLAFLKSPLMKPSIKKPPPGGASREELRNGKLEEAPPPALPPPPRPVADKDTSNESSSGSATQNTKERPPTELSTTEAATTPALPAPTLQPRTLNPASKWSKIQIVTKQTGSECVTAIEIVPATPAGMRPAANVARKFASIARNQVRKKRQMAARERKVTRTIFAILLAFILTWTPYNVMVLVNTFCQSCIPERVWSIGYWLCYVNSTINPACYALCNATFKKTFRHLLLCQYRNIGTAR.

Residues 1–30 (MANFTPVNGSSANQSVRLVTTAHNHLETVE) are Extracellular-facing. Residues asparagine 8 and asparagine 13 are each glycosylated (N-linked (GlcNAc...) asparagine). The chain crosses the membrane as a helical span at residues 31 to 53 (MVFIATVTGSLSLVTVVGNILVM). At 54–67 (LSIKVNRQLQTVNN) the chain is on the cytoplasmic side. A helical membrane pass occupies residues 68-88 (YFLFSLACADLIIGAFSMNLY). Over 89–105 (TLYIIKGYWPLGAVVCD) the chain is Extracellular. An intrachain disulfide couples cysteine 104 to cysteine 184. Residues 106–127 (LWLALDYVVSNASVMNLLIISF) traverse the membrane as a helical segment. The Cytoplasmic segment spans residues 128–147 (DRYFCVTKPLTYPARRTTKM). The helical transmembrane segment at 148–170 (AGLMIAAAWVLSFVLWAPAILFW) threads the bilayer. Over 171-192 (QFVVGKRTVPDNQCFIQFLSNP) the chain is Extracellular. A helical transmembrane segment spans residues 193–215 (AVTFGTAIAAFYLPVVIMTVLYI). The Cytoplasmic portion of the chain corresponds to 216–401 (HISLASRSRV…AARERKVTRT (186 aa)). A disordered region spans residues 271–334 (LEEAPPPALP…APTLQPRTLN (64 aa)). A compositionally biased stretch (pro residues) spans 274–285 (APPPALPPPPRP). The span at 293 to 303 (NESSSGSATQN) shows a compositional bias: polar residues. Residues 310–333 (TELSTTEAATTPALPAPTLQPRTL) are compositionally biased toward low complexity. Residues 402 to 422 (IFAILLAFILTWTPYNVMVLV) traverse the membrane as a helical segment. Over 423–436 (NTFCQSCIPERVWS) the chain is Extracellular. Residues 437-456 (IGYWLCYVNSTINPACYALC) form a helical membrane-spanning segment. Residues 457 to 479 (NATFKKTFRHLLLCQYRNIGTAR) are Cytoplasmic-facing. Residues threonine 459, threonine 463, and threonine 477 each carry the phosphothreonine modification.

It belongs to the G-protein coupled receptor 1 family. Muscarinic acetylcholine receptor subfamily. CHRM4 sub-subfamily.

The protein localises to the cell membrane. It is found in the postsynaptic cell membrane. Its function is as follows. The muscarinic acetylcholine receptor mediates various cellular responses, including inhibition of adenylate cyclase, breakdown of phosphoinositides and modulation of potassium channels through the action of G proteins. Primary transducing effect is inhibition of adenylate cyclase. In Mus musculus (Mouse), this protein is Muscarinic acetylcholine receptor M4 (Chrm4).